A 115-amino-acid polypeptide reads, in one-letter code: NADH-ubiquinone oxidoreductase chain 3 (115 aa).

The next 3 helical transmembrane spans lie at 4–24 (LMVM…AFWL), 55–75 (FFLV…LLPL), and 87–107 (MMLT…YEWM).

Belongs to the complex I subunit 3 family. In terms of assembly, core subunit of respiratory chain NADH dehydrogenase (Complex I) which is composed of 45 different subunits. Interacts with TMEM186. Interacts with TMEM242.

It localises to the mitochondrion inner membrane. The catalysed reaction is a ubiquinone + NADH + 5 H(+)(in) = a ubiquinol + NAD(+) + 4 H(+)(out). Functionally, core subunit of the mitochondrial membrane respiratory chain NADH dehydrogenase (Complex I) which catalyzes electron transfer from NADH through the respiratory chain, using ubiquinone as an electron acceptor. Essential for the catalytic activity of complex I. The protein is NADH-ubiquinone oxidoreductase chain 3 of Peromyscus mexicanus (Mexican deer mouse).